The primary structure comprises 159 residues: Large ribosomal subunit protein uL22 (159 aa).

The protein belongs to the universal ribosomal protein uL22 family. Part of the 50S ribosomal subunit.

In terms of biological role, this protein binds specifically to 23S rRNA. It makes multiple contacts with different domains of the 23S rRNA in the assembled 50S subunit and ribosome. Functionally, the globular domain of the protein is located near the polypeptide exit tunnel on the outside of the subunit, while an extended beta-hairpin is found that lines the wall of the exit tunnel in the center of the 70S ribosome. The chain is Large ribosomal subunit protein uL22 from Ignicoccus hospitalis (strain KIN4/I / DSM 18386 / JCM 14125).